Reading from the N-terminus, the 150-residue chain is Endoribonuclease YbeY (150 aa).

The Zn(2+) site is built by His113, His117, and His123.

The protein belongs to the endoribonuclease YbeY family. Zn(2+) serves as cofactor.

Its subcellular location is the cytoplasm. Functionally, single strand-specific metallo-endoribonuclease involved in late-stage 70S ribosome quality control and in maturation of the 3' terminus of the 16S rRNA. The polypeptide is Endoribonuclease YbeY (Malacoplasma penetrans (strain HF-2) (Mycoplasma penetrans)).